The primary structure comprises 601 residues: FAD-binding monooxygenase stcW (601 aa).

FAD-binding positions include 42-43 (FS), Glu-64, Trp-73, Asp-84, Tyr-90, and Val-133.

Belongs to the FAD-binding monooxygenase family. FAD serves as cofactor.

It participates in mycotoxin biosynthesis; sterigmatocystin biosynthesis. Its function is as follows. FAD-binding monooxygenase; part of the gene cluster that mediates the biosynthesis of sterigmatocystin (ST), a polyketide-derived furanocoumarin which is part of the most toxic and carcinogenic compounds among the known mycotoxins. The first step in the biosynthesis of sterigmatocystin is the production of hexanoate by the fatty acid synthase (FAS) units stcJ and stcK. The polyketide backbone is assembled by the non-reducing polyketide synthase stcA by condensation of the starter hexanoyl-CoA and 7 malonyl-CoA extender units followed by cyclization and release of norsolorinic acid. Norsolorinic acid is the first stable intermediate in the biosynthesis of sterigmatocystin and is converted into averantin (AVN) by the ketoreductase stcE which reduces the hexanoate ketone to an alcohol. Averantin is then oxidized into 5'-hydroxyaverantin (HAVN) by the cytochrome P450 monooxygenase stcF. 5'-hydroxyaverantin is further converted to 5'-oxyaverantin (OAVN) by the 5'-hydroxyaverantin dehydrogenase stcG. The next step is the conversion of OAVN into averufin (AVF) which is catalyzed by a yet to be identified enzyme. The cytochrome P450 monooxygenase stcB and the flavin-binding monooxygenase stcW are both required for the conversion of averufin to 1-hydroxyversicolorone. The esterase stcI probably catalyzes the formation of versiconal hemiacetal acetate from 1-hydroxyversicolorone. The oxydoreductase stcN then probably catalyzes the biosynthetic step from versiconal to versicolorin B (VERB). The next step is performed by the versicolorin B desaturase stcL to produce versicolorin A (VERA). The ketoreductase stcU and the cytochrome P450 monooxygenase stcS are involved in the conversion of versicolorin A to demethylsterigmatocystin. The Baeyer-Villiger oxidas stcQ and the reductase stcR might be involved in the biosynthetic step from versicolorin A to demethylsterigmatocystin. The final step in the biosynthesis of sterigmatocystin is the methylation of demethylsterigmatocystin catalyzed by the methyltransferase stcP. The sequence is that of FAD-binding monooxygenase stcW from Emericella nidulans (strain FGSC A4 / ATCC 38163 / CBS 112.46 / NRRL 194 / M139) (Aspergillus nidulans).